The sequence spans 557 residues: Aerobic glycerol-3-phosphate dehydrogenase (557 aa).

FAD is bound at residue 21-49; that stretch reads DVVIVGGGITGAGIALDASNRGMKVALVE.

Belongs to the FAD-dependent glycerol-3-phosphate dehydrogenase family. FAD serves as cofactor.

Its subcellular location is the cytoplasm. The catalysed reaction is a quinone + sn-glycerol 3-phosphate = dihydroxyacetone phosphate + a quinol. Its pathway is polyol metabolism; glycerol degradation via glycerol kinase pathway; glycerone phosphate from sn-glycerol 3-phosphate (aerobic route): step 1/1. This chain is Aerobic glycerol-3-phosphate dehydrogenase (glpD), found in Staphylococcus epidermidis (strain ATCC 35984 / DSM 28319 / BCRC 17069 / CCUG 31568 / BM 3577 / RP62A).